Consider the following 1148-residue polypeptide: Envelopment polyprotein (1148 aa).

A signal peptide spans 1–23; that stretch reads MGELSPVCLYLLLQGLLLCNTGA. The Lumenal segment spans residues 24-495; sequence ARNLNELKME…VPGLHGWATM (472 aa). Intrachain disulfides connect cysteine 34–cysteine 159, cysteine 68–cysteine 165, cysteine 117–cysteine 136, cysteine 141–cysteine 146, cysteine 183–cysteine 193, and cysteine 218–cysteine 257. Asparagine 142 is a glycosylation site (N-linked (GlcNAc...) asparagine; by host). N-linked (GlcNAc...) asparagine; by host glycosylation is present at asparagine 357. 4 disulfide bridges follow: cysteine 386/cysteine 445, cysteine 390/cysteine 399, cysteine 415/cysteine 434, and cysteine 462/cysteine 485. N-linked (GlcNAc...) asparagine; by host glycosylation is present at asparagine 409. Residues 496 to 516 traverse the membrane as a helical segment; that stretch reads LLLLTLCFGWVLIPTITMILL. The Cytoplasmic segment spans residues 517 to 637; sequence KILIAFAYLC…LSLFRYRSRF (121 aa). A binding to the ribonucleoprotein region spans residues 526-543; it reads CSKYNTDSKFRILIEKVK. 2 CCHC-type zinc fingers span residues 555–575 and 580–601; these read CEVC…RKSC and CPYC…FKVC. 3 binding to the ribonucleoprotein regions span residues 598–615, 602–613, and 621–635; these read FKVC…RKSL, KLTSRFQENLRK, and MQGC…RYRS. The region spanning 621–644 is the ITAM domain; sequence MQGCYRTLSLFRYRSRFFVGLVWC. The short motif at 625–628 is the YxxL element; sequence YRTL. The chain crosses the membrane as a helical span at residues 638–658; sequence FVGLVWCVLLVLELIVWAASA. Residues 659-1114 lie on the Lumenal side of the membrane; the sequence is ETQNLNAGWT…EWILGVLNGN (456 aa). Disulfide bonds link cysteine 745–cysteine 780, cysteine 749–cysteine 787, cysteine 761–cysteine 894, cysteine 775–cysteine 905, cysteine 790–cysteine 913, cysteine 816–cysteine 825, cysteine 833–cysteine 842, and cysteine 873–cysteine 877. Positions 767–787 are fusion loop; that stretch reads YEYETGWGCNPPDCPGVGTGC. An N-linked (GlcNAc...) asparagine; by host glycan is attached at asparagine 937. Intrachain disulfides connect cysteine 979–cysteine 1009, cysteine 1002–cysteine 1054, cysteine 1019–cysteine 1024, cysteine 1055–cysteine 1060, and cysteine 1094–cysteine 1098. Residues 1115–1135 form a helical membrane-spanning segment; it reads WMVVAVLVVLLILSILLFTLC. 2 binding to the ribonucleoprotein regions span residues 1131 to 1143 and 1131 to 1148; these read LFTL…PSYR and LFTL…EHKP. Residues 1136–1148 are Cytoplasmic-facing; the sequence is CPRRPSYRKEHKP.

The protein belongs to the hantavirus envelope glycoprotein family. In terms of assembly, homodimer. Homotetramer; forms heterotetrameric Gn-Gc spikes in the pre-fusion conformation. Interacts (via C-terminus) with the nucleoprotein. Interacts with host TUFM; this interaction contributes to the virus-induced degradation of mitochondria by autophagy, which leads to degradation of host MAVS and inhibition of type I interferon (IFN) responses. Interacts with host MAP1LC3B; this interaction contributes to the virus-induced degradation of mitochondria by autophagy, which leads to degradation of host MAVS and inhibition of type I interferon (IFN) responses. As to quaternary structure, homodimer. Homotetramer; forms heterotetrameric Gn-Gc spikes in the pre-fusion conformation. Homotrimer; forms homotrimer in the post-fusion conformation at acidic pH. Interacts (via C-terminus) with the nucleoprotein. Post-translationally, envelope polyprotein precursor is quickly cleaved in vivo just after synthesis, presumably by host signal peptidase.

It localises to the virion membrane. The protein localises to the host cell surface. The protein resides in the host Golgi apparatus membrane. Its subcellular location is the host endoplasmic reticulum membrane. It is found in the host mitochondrion. Its function is as follows. Forms homotetramers with glycoprotein C at the surface of the virion. Attaches the virion to host cell receptors including integrin ITGAV/ITGB3. This attachment induces virion internalization predominantly through clathrin-dependent endocytosis. Mediates the assembly and budding of infectious virus particles through its interaction with the nucleocapsid protein and the viral genome. May dysregulate normal immune and endothelial cell responses through an ITAM motif. Translocates to mitochondria, binds to host TUFM and recruits MAP1LC3B. These interactions induce mitochondrial autophagy and therefore destruction of host MAVS leading to inhibition of type I interferon (IFN) responses. Concomitant breakdown of glycoprotein N is apparently prevented by the nucleoprotein that may inhibit Gn-stimulated autophagosome-lysosome fusion. Interacts with the viral genomic RNA. Forms homotetramers with glycoprotein N at the surface of the virion. Attaches the virion to host cell receptors including integrin ITGAV/ITGB3. This attachment induces virion internalization predominantly through clathrin-dependent endocytosis. Class II fusion protein that promotes fusion of viral membrane with host endosomal membrane after endocytosis of the virion. The protein is Envelopment polyprotein (GP) of Puumala virus (strain K27).